Reading from the N-terminus, the 542-residue chain is Chaperonin GroEL 2 (542 aa).

Residues 30–33, lysine 51, 87–91, glycine 415, and aspartate 495 contribute to the ATP site; these read TLGP and DGTTT.

This sequence belongs to the chaperonin (HSP60) family. Forms a cylinder of 14 subunits composed of two heptameric rings stacked back-to-back. Interacts with the co-chaperonin GroES.

It is found in the cytoplasm. The catalysed reaction is ATP + H2O + a folded polypeptide = ADP + phosphate + an unfolded polypeptide.. Together with its co-chaperonin GroES, plays an essential role in assisting protein folding. The GroEL-GroES system forms a nano-cage that allows encapsulation of the non-native substrate proteins and provides a physical environment optimized to promote and accelerate protein folding. In Methylococcus capsulatus (strain ATCC 33009 / NCIMB 11132 / Bath), this protein is Chaperonin GroEL 2.